A 484-amino-acid polypeptide reads, in one-letter code: Cobyric acid synthase (484 aa).

The GATase cobBQ-type domain occupies Ala-251 to Tyr-438. The active-site Nucleophile is Cys-333. The active site involves His-430.

It belongs to the CobB/CobQ family. CobQ subfamily.

Its pathway is cofactor biosynthesis; adenosylcobalamin biosynthesis. Its function is as follows. Catalyzes amidations at positions B, D, E, and G on adenosylcobyrinic A,C-diamide. NH(2) groups are provided by glutamine, and one molecule of ATP is hydrogenolyzed for each amidation. The polypeptide is Cobyric acid synthase (Rhizobium rhizogenes (strain K84 / ATCC BAA-868) (Agrobacterium radiobacter)).